We begin with the raw amino-acid sequence, 218 residues long: Ribose-5-phosphate isomerase A (218 aa).

Substrate-binding positions include 28-31, 81-84, and 94-97; these read TGST, DGAD, and KGGG. The Proton acceptor role is filled by glutamate 103. Substrate is bound at residue lysine 121.

It belongs to the ribose 5-phosphate isomerase family. Homodimer.

The enzyme catalyses aldehydo-D-ribose 5-phosphate = D-ribulose 5-phosphate. It participates in carbohydrate degradation; pentose phosphate pathway; D-ribose 5-phosphate from D-ribulose 5-phosphate (non-oxidative stage): step 1/1. Functionally, catalyzes the reversible conversion of ribose-5-phosphate to ribulose 5-phosphate. This chain is Ribose-5-phosphate isomerase A, found in Aliivibrio salmonicida (strain LFI1238) (Vibrio salmonicida (strain LFI1238)).